A 256-amino-acid polypeptide reads, in one-letter code: Cytochrome c-type biogenesis protein CcmE homolog, mitochondrial (256 aa).

The transit peptide at 1–57 (MAARLLFRRSSQILRSIQRNPQISSSFESPPCPIFHSLTTASPDPSRLSSLTFLRSL) directs the protein to the mitochondrion. A helical transmembrane segment spans residues 84–106 (LWTYALTFSCIAGFVVIVLNQFQ). Heme-binding residues include His-222 and Tyr-226.

It belongs to the CcmE/CycJ family.

The protein resides in the mitochondrion inner membrane. It localises to the mitochondrion intermembrane space. Functionally, heme-binding chaperone that may be involved in cytochrome c maturation in mitochondria. This is Cytochrome c-type biogenesis protein CcmE homolog, mitochondrial from Arabidopsis thaliana (Mouse-ear cress).